The chain runs to 188 residues: Cytochrome b-245 chaperone 1 homolog (188 aa).

The chain crosses the membrane as a helical span at residues S20–T42.

This sequence belongs to the CYBC1 family.

It is found in the endoplasmic reticulum membrane. Functions as a chaperone necessary for a stable expression of the CYBA and CYBB subunits of the cytochrome b-245 heterodimer. This Xenopus tropicalis (Western clawed frog) protein is Cytochrome b-245 chaperone 1 homolog (cybc1).